Consider the following 499-residue polypeptide: Glutelin type-B 1 (499 aa).

An N-terminal signal peptide occupies residues 1–24; the sequence is MASSVFSRFSIYFCVLLLCHGSMA. 2 disulfides stabilise this stretch: cysteine 45–cysteine 78 and cysteine 121–cysteine 309. Cupin type-1 domains are found at residues 50-247 and 315-464; these read LQAF…VAAK and VNIE…EQAR. A disordered region spans residues 467–499; it reads KNNRGEEHGAFTPRFQQQYYPGLSNESESETSE.

Belongs to the 11S seed storage protein (globulins) family. Hexamer; each subunit is composed of an acidic and a basic chain derived from a single precursor and linked by a disulfide bond.

In terms of biological role, seed storage protein. The chain is Glutelin type-B 1 (GluB1-A) from Oryza sativa subsp. japonica (Rice).